The following is a 202-amino-acid chain: N-(5'-phosphoribosyl)anthranilate isomerase (202 aa).

The protein belongs to the TrpF family.

It carries out the reaction N-(5-phospho-beta-D-ribosyl)anthranilate = 1-(2-carboxyphenylamino)-1-deoxy-D-ribulose 5-phosphate. The protein operates within amino-acid biosynthesis; L-tryptophan biosynthesis; L-tryptophan from chorismate: step 3/5. The protein is N-(5'-phosphoribosyl)anthranilate isomerase of Bacillus cereus (strain ATCC 14579 / DSM 31 / CCUG 7414 / JCM 2152 / NBRC 15305 / NCIMB 9373 / NCTC 2599 / NRRL B-3711).